A 194-amino-acid chain; its full sequence is Ribonuclease HII (194 aa).

An RNase H type-2 domain is found at 1-194 (MTVGVDEVGR…RLFPRDDGLR (194 aa)). Positions 6, 7, and 102 each coordinate a divalent metal cation.

It belongs to the RNase HII family. It depends on Mn(2+) as a cofactor. Mg(2+) serves as cofactor.

It localises to the cytoplasm. It catalyses the reaction Endonucleolytic cleavage to 5'-phosphomonoester.. Endonuclease that specifically degrades the RNA of RNA-DNA hybrids. The protein is Ribonuclease HII of Synechococcus sp. (strain WH7803).